We begin with the raw amino-acid sequence, 341 residues long: Thromboxane A2 receptor (341 aa).

The Extracellular portion of the chain corresponds to 1–29 (MWLNSTSLGACFRPVNITLQERRAIASPW). Residues Asn4 and Asn16 are each glycosylated (N-linked (GlcNAc...) asparagine). The chain crosses the membrane as a helical span at residues 30–52 (FAASFCALGLGSNLLALSVLAGA). The Cytoplasmic segment spans residues 53–65 (RPGAGPRSSFLAL). Residues 66–86 (LCGLVLTDFLGLLVTGAVVAS) form a helical membrane-spanning segment. The Extracellular segment spans residues 87–105 (QHAALLDWRATDPGCRLCH). Cys104 and Cys181 are joined by a disulfide. A helical transmembrane segment spans residues 106-127 (FMGAAMVFFGLCPLLLGAAMAA). The Cytoplasmic portion of the chain corresponds to 128–147 (ERFVGITRPFSRPAATSRRA). A helical membrane pass occupies residues 148 to 170 (WATVGLVWVGAGTLGLLPLLGLG). Residues 171–191 (RYSVQYPGSWCFLTLGAERGD) are Extracellular-facing. The chain crosses the membrane as a helical span at residues 192-217 (VAFGLMFALLGSVSVGLSLLLNTVSV). The Cytoplasmic portion of the chain corresponds to 218–244 (ATLCRVYHAREATQRPRDCEVEMMVQL). A helical membrane pass occupies residues 245–268 (VGIMVVATVCWMPLLVFILQTLLQ). At 269–287 (TLPVMSPSGQLLRTTERQL) the chain is on the extracellular side. Residues 288-309 (LIYLRVATWNQILDPWVYILFR) traverse the membrane as a helical segment. Residues 310–341 (RSVLRRLHPRFTSQLQAVSLHSPPTQAMLSGP) are Cytoplasmic-facing. Ser328 is subject to Phosphoserine.

The protein belongs to the G-protein coupled receptor 1 family. In terms of assembly, interacts with RPGRIP1L. Interacts with RACK1; the interaction regulates TBXA2R cell surface expression. As to expression, in the brain, expressed in all types of glial cells. In the kidney, expressed in the mesangial cells of the glomerulus, smooth muscle cells of the renal arterioles, and in transitional cell epithelium of renal pelvis.

The protein resides in the cell membrane. Its function is as follows. Receptor for thromboxane A2 (TXA2), a potent stimulator of platelet aggregation. The activity of this receptor is mediated by a G-protein that activates a phosphatidylinositol-calcium second messenger system. In the kidney, the binding of TXA2 to glomerular TP receptors causes intense vasoconstriction. Activates phospholipase C and adenylyl cyclase. The chain is Thromboxane A2 receptor (Tbxa2r) from Rattus norvegicus (Rat).